Here is a 170-residue protein sequence, read N- to C-terminus: MORN repeat-containing protein 5 (170 aa).

MORN repeat units follow at residues 8–30 (YFGE…TDTR), 31–53 (YIGE…SGSR), and 54–75 (FDAI…DGLQ).

In terms of tissue distribution, only detected in testis (at protein level).

Its subcellular location is the cell projection. The protein resides in the cilium. The protein localises to the flagellum. This chain is MORN repeat-containing protein 5 (Morn5), found in Mus musculus (Mouse).